The sequence spans 337 residues: Glyceraldehyde-3-phosphate dehydrogenase (337 aa).

NAD(+)-binding positions include 12 to 13 (RI), aspartate 34, and arginine 79. D-glyceraldehyde 3-phosphate contacts are provided by residues 150–152 (SCT), threonine 181, 210–211 (TG), and arginine 233. Residue cysteine 151 is the Nucleophile of the active site. Asparagine 315 is an NAD(+) binding site.

It belongs to the glyceraldehyde-3-phosphate dehydrogenase family. In terms of assembly, homotetramer.

The protein localises to the cytoplasm. The catalysed reaction is D-glyceraldehyde 3-phosphate + phosphate + NAD(+) = (2R)-3-phospho-glyceroyl phosphate + NADH + H(+). Its pathway is carbohydrate degradation; glycolysis; pyruvate from D-glyceraldehyde 3-phosphate: step 1/5. The protein is Glyceraldehyde-3-phosphate dehydrogenase (GPD-1) of Claviceps purpurea (strain 20.1) (Ergot fungus).